The sequence spans 178 residues: Protamine-like protein (178 aa).

Disordered regions lie at residues 1–27 (PSTTSSKSPKRRAKSPRRKRTGPTVSD) and 77–178 (SVVK…RAKK). 2 stretches are compositionally biased toward basic residues: residues 8 to 21 (SPKRRAKSPRRKRT) and 94 to 178 (PRRR…RAKK). In terms of domain architecture, H15 spans 21 to 89 (TGPTVSDLIL…KAKGFYKLNK (69 aa)).

Male germ cells.

The protein resides in the nucleus. It localises to the chromosome. Its function is as follows. Replaces histones in the chromatin of sperm during the haploid phase of spermatogenesis. Compacts sperm DNA into a highly condensed, stable and inactive complex. The protein is Protamine-like protein of Mullus surmuletus (Striped red mullet).